The chain runs to 530 residues: Cation transporter HKT2;2 (530 aa).

The Cytoplasmic portion of the chain corresponds to 1 to 40 (MTSIYQEFIHTKCQSFRSIGRYVLHSIVLIYRFVSLHVHP). 2 helical membrane-spanning segments follow: residues 41–61 (FWIQ…LLMF) and 102–122 (IVVL…FLGL). At 123–186 (MLRLKHKHNP…DLKRSKRLRW (64 aa)) the chain is on the cytoplasmic side. Transmembrane regions (helical) follow at residues 187 to 207 (FLGF…FLLV) and 260 to 280 (GLLL…PLFL). The Cytoplasmic portion of the chain corresponds to 281-317 (RILIWFLGKVTKLKDLKLMIKNSDELQYDYLLPKLPT). Helical transmembrane passes span 318–338 (AFLA…FGSV) and 372–392 (IDCS…MYLP). Residues 393–420 (PSTTFALSNGDEKTANKKAKRKLGLVVR) lie on the Cytoplasmic side of the membrane. 2 consecutive transmembrane segments (helical) span residues 421 to 441 (NLAF…LITE) and 494 to 514 (SLSG…MLYG). Over 515-530 (RLKAFTKGTGEYWRLW) the chain is Cytoplasmic.

It belongs to the TrkH potassium transport family. HKT (TC 2.A.38.3) subfamily.

Its subcellular location is the membrane. Seems to be involved in regulation of potassium-sodium homeostasis. Seems to act as a potassium-sodium cotransporter, which mediates increased potassium uptake under external sodium accumulation and contributes to salt-tolerance in cultivar indica Pokkali. The polypeptide is Cation transporter HKT2;2 (Oryza sativa subsp. indica (Rice)).